A 264-amino-acid chain; its full sequence is tRNA pseudouridine synthase A (264 aa).

The active-site Nucleophile is Asp51. Tyr109 provides a ligand contact to substrate.

Belongs to the tRNA pseudouridine synthase TruA family. Homodimer.

The catalysed reaction is uridine(38/39/40) in tRNA = pseudouridine(38/39/40) in tRNA. Functionally, formation of pseudouridine at positions 38, 39 and 40 in the anticodon stem and loop of transfer RNAs. The polypeptide is tRNA pseudouridine synthase A (Vibrio campbellii (strain ATCC BAA-1116)).